The primary structure comprises 377 residues: Probable aspartic-type endopeptidase CTSD (377 aa).

The Peptidase A1 domain occupies 1 to 292; that stretch reads SLIDTGASRT…DFDKNRVGLA (292 aa). Residue Asp4 is part of the active site. An N-linked (GlcNAc...) asparagine glycan is attached at Asn58. Asp186 is an active-site residue. The interval 296 to 351 is disordered; it reads YGETKDPPSSSHPPPAPTSNKASGGSPGLPEQSGTSSATTSTTGEPSSGSTASPSA. A compositionally biased stretch (low complexity) spans 328–351; it reads SGTSSATTSTTGEPSSGSTASPSA. A lipid anchor (GPI-anchor amidated serine) is attached at Ser350. Residues 351–377 constitute a propeptide, removed in mature form; it reads AASSVSMSAWLSLAVFLSTASSLILWD.

It belongs to the peptidase A1 family.

The protein localises to the cell membrane. Secreted aspartic-type endopeptidase which is secreted and contributes to virulence. The polypeptide is Probable aspartic-type endopeptidase CTSD (CTSD) (Arthroderma otae (strain ATCC MYA-4605 / CBS 113480) (Microsporum canis)).